A 52-amino-acid polypeptide reads, in one-letter code: uncharacterized protein (52 aa).

Residues 3 to 46 (KIQLESSNQSVLKLEERRLNLTAEIERIYGQMDLKRKELENANL) adopt a coiled-coil conformation.

This is an uncharacterized protein from Dictyostelium discoideum (Social amoeba).